Reading from the N-terminus, the 812-residue chain is MIMQSLFSNKYKFKDTEEKLNAYWDKIKLYKWKNLQGKQFIIDTPPPTISGQLHIGHVFSYCHTDFIARYQRMLGKDVLYPIGFDDNGLPTERLVEKIKKVRAADIDRKEFKALCNEVSAKFRMEFKILFQSLGISYDWDLEYHTISEEIQKLSQMSFIALYNMGKIYRKLQPIFWDCADRTAIARVEVEEKEMSSFMSTIAFSTEAGERINIATTRPELMPACVALFFNPLDIRYQHLQGQYAIVPIFGNKVPILSDEQVKIDKGTGLVMCCTFGDELDVYWWNKHNLNTQIIISKSGTLDLKHNIAETDTLSGKLHGVSIVEARKLVLETLSKCNLLIKKEEILHNVKCAERSGMPIEILLSNQWFIKVVEVKHELLEQVRKINWYPQSMRKQIEMWIDGLNWDWCISRQRYFGIPFPVWYSKRDNEEIIIPDVNELPIDPTETLPQGYSKEEVEADVDVMDTWATSSLSPQFNSIHTGINSIPLVPASLRAQSHEIIRSWAFYTILQAYYHHNSIPWENIMVSGWCLAADKSKMSKSKGNALIPNQLLQEYGADVIRYWAANSRLGSDTVFSDEVLQLGKRLVTKLWNASKFVSMFVSQCQIPDLNYVTETMDKWVLTKLYKVIVKATESFDVFEYCVALDYIESFFWKDFCDNYLELVKKRAYGESVTSKENLSAVNTLSFVLTTLLKMLAPFMPYITEEIYSTLYNNGSIHDHDNWPIVNTSLCNEMDEQLGEDFIEILNQVRKIKANAQLSVKCKIYKLIINSENYDFPTSWENDLKAVCNAEHIVRDKRTSYYDDKFLVSVQFAS.

The 'HIGH' region motif lies at 47–57 (PTISGQLHIGH). The short motif at 536-540 (KMSKS) is the 'KMSKS' region element. K539 is an ATP binding site.

This sequence belongs to the class-I aminoacyl-tRNA synthetase family. ValS type 2 subfamily. As to quaternary structure, monomer.

Its subcellular location is the cytoplasm. The catalysed reaction is tRNA(Val) + L-valine + ATP = L-valyl-tRNA(Val) + AMP + diphosphate. In terms of biological role, catalyzes the attachment of valine to tRNA(Val). As ValRS can inadvertently accommodate and process structurally similar amino acids such as threonine, to avoid such errors, it has a 'posttransfer' editing activity that hydrolyzes mischarged Thr-tRNA(Val) in a tRNA-dependent manner. In Ehrlichia ruminantium (strain Gardel), this protein is Valine--tRNA ligase.